A 196-amino-acid polypeptide reads, in one-letter code: uncharacterized protein (196 aa).

Residues 1-183 form the Macro domain; the sequence is MREFHYGVHM…RFLFILSDLG (183 aa).

Belongs to the MacroD-type family.

This is an uncharacterized protein from Thermoplasma acidophilum (strain ATCC 25905 / DSM 1728 / JCM 9062 / NBRC 15155 / AMRC-C165).